The primary structure comprises 126 residues: Fatty acid-binding protein 1, liver (126 aa).

This sequence belongs to the calycin superfamily. Fatty-acid binding protein (FABP) family.

It is found in the cytoplasm. Binds free fatty acids and their coenzyme A derivatives, bilirubin, and some other small molecules in the cytoplasm. May be involved in intracellular lipid transport. The specificity of axolotl L-FABP differs from that of LB-FABP. In Ambystoma mexicanum (Axolotl), this protein is Fatty acid-binding protein 1, liver.